The primary structure comprises 352 residues: Phosphatase Herzog (352 aa).

The interval 1-102 (MDATSIITQV…PLPDQQRYLL (102 aa)) is prion-like domain necessary for both protein assembly and membrane targeting. The interval 103 to 267 (PQVRLTDMHR…ELIPLFEKLS (165 aa)) is mediates substrate recognition. In terms of domain architecture, FCP1 homology spans 108–266 (TDMHRKCMVI…RELIPLFEKL (159 aa)). Disordered stretches follow at residues 284-310 (NNQTNQQQHPQELQQAPNQLHQQLQQQ) and 332-352 (TMLNQQQTSPPSPQSELLQKT).

In terms of assembly, monomer. Forms higher-order protein aggregates with amyloid-like features during gastrulation. Interacts with babo, dah, Irk1, pch2, Ras64B, sax and Src64B.

Its subcellular location is the cell membrane. The enzyme catalyses O-phospho-L-seryl-[protein] + H2O = L-seryl-[protein] + phosphate. With respect to regulation, phosphatase activity requires amyloid-like aggregation on the membrane. Functionally, prion-like membrane-associated phosphatase. Phosphatase activity depends on amyloid-like assembly at the membrane. Might have a role in establishment of segment polarity in embryos. This Drosophila melanogaster (Fruit fly) protein is Phosphatase Herzog.